Here is a 134-residue protein sequence, read N- to C-terminus: UPF0216 protein AF_0460 (134 aa).

It belongs to the UPF0216 family.

The chain is UPF0216 protein AF_0460 from Archaeoglobus fulgidus (strain ATCC 49558 / DSM 4304 / JCM 9628 / NBRC 100126 / VC-16).